An 81-amino-acid chain; its full sequence is MSHSVKVYDTCIGCTQCVRACPCDVLEMVSWDGCKAGQIASAPRTEDCIGCKRCETACPTDFLSVRVYLGGETTRSMGLAY.

4Fe-4S ferredoxin-type domains follow at residues 2 to 31 (SHSV…MVSW) and 39 to 68 (IASA…VRVY). [4Fe-4S] cluster-binding residues include C11, C14, C17, C21, C48, C51, C54, and C58.

In terms of assembly, the eukaryotic PSI reaction center is composed of at least 11 subunits. The cofactor is [4Fe-4S] cluster.

It is found in the plastid. It localises to the chloroplast thylakoid membrane. The enzyme catalyses reduced [plastocyanin] + hnu + oxidized [2Fe-2S]-[ferredoxin] = oxidized [plastocyanin] + reduced [2Fe-2S]-[ferredoxin]. Functionally, apoprotein for the two 4Fe-4S centers FA and FB of photosystem I (PSI); essential for photochemical activity. FB is the terminal electron acceptor of PSI, donating electrons to ferredoxin. The C-terminus interacts with PsaA/B/D and helps assemble the protein into the PSI complex. Required for binding of PsaD and PsaE to PSI. PSI is a plastocyanin/cytochrome c6-ferredoxin oxidoreductase, converting photonic excitation into a charge separation, which transfers an electron from the donor P700 chlorophyll pair to the spectroscopically characterized acceptors A0, A1, FX, FA and FB in turn. This Rhodomonas salina (Cryptomonas salina) protein is Photosystem I iron-sulfur center.